The chain runs to 433 residues: N-lysine methyltransferase SMYD2 (433 aa).

In terms of domain architecture, SET spans 7-241 (GGLERFCSAG…PGDEVFTSYI (235 aa)). 17–19 (KGR) is an S-adenosyl-L-methionine binding site. Residues C52, C55, C65, C68, C74, C78, H86, and C90 each coordinate Zn(2+). An MYND-type zinc finger spans residues 52–90 (CECCFARKEGLSKCGRCKQAFYCDVECQKEDWPLHKLEC). S-adenosyl-L-methionine-binding positions include H137, 206 to 207 (NH), and 258 to 260 (YFF). S283 bears the Phosphoserine mark.

Belongs to the class V-like SAM-binding methyltransferase superfamily. In terms of assembly, interacts (via MYND-type zinc finger) with EPB41L3. Interacts (via SET domain) with p53/TP53. Interacts with RB1 and HSP90AA1. Interacts with RNA polymerase II and HELZ. Interacts with SIN3A and HDAC1. As to expression, highly expressed in heart, skeletal muscle and brain tissue. During cardiac development, it is differentially expressed with highest expression in the neonatal heart while very low expression is detected at 12.5 dpc and adult. Specifically expressed in cardiomyocytes (at protein level).

The protein localises to the cytoplasm. Its subcellular location is the cytosol. The protein resides in the nucleus. It carries out the reaction L-lysyl(4)-[histone H3] + 3 S-adenosyl-L-methionine = N(6),N(6),N(6)-trimethyl-L-lysyl(4)-[histone H3] + 3 S-adenosyl-L-homocysteine + 3 H(+). The enzyme catalyses L-lysyl-[protein] + S-adenosyl-L-methionine = N(6)-methyl-L-lysyl-[protein] + S-adenosyl-L-homocysteine + H(+). Functionally, protein-lysine N-methyltransferase that methylates both histones and non-histone proteins, including p53/TP53 and RB1. Specifically trimethylates histone H3 'Lys-4' (H3K4me3) in vivo. The activity requires interaction with HSP90alpha. Shows even higher methyltransferase activity on p53/TP53. Monomethylates 'Lys-370' of p53/TP53, leading to decreased DNA-binding activity and subsequent transcriptional regulation activity of p53/TP53. Monomethylates RB1 at 'Lys-860'. This chain is N-lysine methyltransferase SMYD2 (Smyd2), found in Mus musculus (Mouse).